Reading from the N-terminus, the 364-residue chain is 3-isopropylmalate dehydrogenase (364 aa).

An NAD(+)-binding site is contributed by 79–92 (GSKWDHLPEIEKPE). Substrate-binding residues include arginine 100, arginine 110, arginine 139, and aspartate 227. Residues aspartate 227, aspartate 251, and aspartate 255 each coordinate Mg(2+). 285-297 (GSAPNIAGKTIAN) is a binding site for NAD(+).

Belongs to the isocitrate and isopropylmalate dehydrogenases family. LeuB type 1 subfamily. Homodimer. Mg(2+) is required as a cofactor. Mn(2+) serves as cofactor.

The protein localises to the cytoplasm. The enzyme catalyses (2R,3S)-3-isopropylmalate + NAD(+) = 4-methyl-2-oxopentanoate + CO2 + NADH. It functions in the pathway amino-acid biosynthesis; L-leucine biosynthesis; L-leucine from 3-methyl-2-oxobutanoate: step 3/4. In terms of biological role, catalyzes the oxidation of 3-carboxy-2-hydroxy-4-methylpentanoate (3-isopropylmalate) to 3-carboxy-4-methyl-2-oxopentanoate. The product decarboxylates to 4-methyl-2 oxopentanoate. The sequence is that of 3-isopropylmalate dehydrogenase from Buchnera aphidicola subsp. Thelaxes suberi.